The sequence spans 256 residues: Tumor necrosis factor receptor superfamily member 9 (256 aa).

Residues 1–23 (MGNNCYNVVVIVLLLVGCEKVGA) form the signal peptide. TNFR-Cys repeat units lie at residues 24–45 (VQNS…PVCK), 46–85 (SCPP…NAEC), 86–117 (ECIE…QGCK), and 118–159 (TCSL…VVCG). The Extracellular segment spans residues 24-187 (VQNSCDNCQP…GPGGHSLQVL (164 aa)). Disulfide bonds link Cys28-Cys37, Cys31-Cys44, Cys47-Cys61, Cys64-Cys77, Cys67-Cys85, Cys87-Cys93, Cys98-Cys105, Cys101-Cys116, and Cys119-Cys133. 2 N-linked (GlcNAc...) asparagine glycosylation sites follow: Asn128 and Asn138. An intrachain disulfide couples Cys139 to Cys158. A helical membrane pass occupies residues 188-208 (TLFLALTSALLLALIFITLLF). Residues 209–256 (SVLKWIRKKFPHIFKQPFKKTTGAAQEEDACSCRCPQEEEGGGGGYEL) lie on the Cytoplasmic side of the membrane.

In terms of assembly, predominantly homodimeric, but may also exist as a monomer. Associates with p56-LCK. Interacts with TRAF1, TRAF2 and TRAF3. Expressed in activated thymocytes, splenic T cells, CD4(+), and CD8(+) T-cells.

It localises to the cell membrane. Receptor for TNFSF9/4-1BBL. Conveys a signal that enhances CD8(+) T-cell survival, cytotoxicity, and mitochondrial activity, thereby promoting immunity against viruses and tumors. This Mus musculus (Mouse) protein is Tumor necrosis factor receptor superfamily member 9 (Tnfrsf9).